Here is a 169-residue protein sequence, read N- to C-terminus: Putative tRNA (cytidine(34)-2'-O)-methyltransferase (169 aa).

S-adenosyl-L-methionine is bound by residues I79, G104, I125, and S133.

The protein belongs to the class IV-like SAM-binding methyltransferase superfamily. RNA methyltransferase TrmH family. TrmL subfamily.

The protein localises to the cytoplasm. The enzyme catalyses cytidine(34) in tRNA + S-adenosyl-L-methionine = 2'-O-methylcytidine(34) in tRNA + S-adenosyl-L-homocysteine + H(+). It carries out the reaction 5-carboxymethylaminomethyluridine(34) in tRNA(Leu) + S-adenosyl-L-methionine = 5-carboxymethylaminomethyl-2'-O-methyluridine(34) in tRNA(Leu) + S-adenosyl-L-homocysteine + H(+). Could methylate the ribose at the nucleotide 34 wobble position in tRNA. In Listeria innocua serovar 6a (strain ATCC BAA-680 / CLIP 11262), this protein is Putative tRNA (cytidine(34)-2'-O)-methyltransferase.